Here is a 346-residue protein sequence, read N- to C-terminus: Sensor histidine kinase GraS (346 aa).

A run of 2 helical transmembrane segments spans residues 15 to 35 (MNWI…SLID) and 43 to 63 (LFYI…LTYF). In terms of domain architecture, Histidine kinase spans 126–332 (EFVHDIKTPV…TVRLIFPLQN (207 aa)).

As to quaternary structure, interacts with GraX.

It localises to the cell membrane. The enzyme catalyses ATP + protein L-histidine = ADP + protein N-phospho-L-histidine.. Its function is as follows. Member of the two-component regulatory system GraR/GraS involved in resistance against cationic antimicrobial peptides (CAMPs). Functions as a sensor protein kinase which phosphorylates GraR through the auxiliary protein GraX. In turn, GraR up-regulates many genes such as adhesins, exoproteins, transporters, toxins, and proteins involved in cell wall synthesis. Down-regulates the expression of many genes involved in RNA and amino acid synthesis or glycolysis. The sequence is that of Sensor histidine kinase GraS (graS) from Staphylococcus aureus (strain COL).